We begin with the raw amino-acid sequence, 114 residues long: Protein ORF3 (114 aa).

Hydrophobic regions lie at residues Cys-6 to Cys-22 and Ala-33 to Leu-53. Positions Val-28–Pro-68 are interaction with host HPX. Residues Val-48–Pro-72 are interaction with the capsid protein. Residue Ser-71 is modified to Phosphoserine; by host. The tract at residues Pro-72–Arg-114 is homodimerization, and interaction with host AMBP/bikunin. Residues Leu-91–Arg-114 are disordered. Residues Arg-95–Val-104 are interaction with host SRC, HCK, FYN, PIK3R3 and GRB2. A PTAP/PSAP motif motif is present at residues Pro-96 to Pro-99.

The protein belongs to the hepevirus ORF3 protein family. As to quaternary structure, forms homooligomers. Interacts with host SRC, HCK, FYN, PIK3R3 and GRB2 (via SH3 domain); binding does not activate the kinases. Interacts with host AMBP/bikunin and AMBP/alpha-1-microglobulin peptides. Interacts with host HPX/hemopexin. Interacts (when phosphorylated) with capsid protein ORF2. Interacts with host TSG101; this interaction plays a role in viral release from the host cell. Interacts with host SIRPA; this interaction down-regulates the phosphorylation of host IRF3. Post-translationally, palmitoylated in the N-terminus.

The protein localises to the host endoplasmic reticulum membrane. Its subcellular location is the host cytoplasm. It localises to the host cytoskeleton. It is found in the virion. The protein resides in the host cell membrane. Functionally, small multifunctional phosphoprotein involved in virion morphogenesis, egress and counteracting host innate immunity. Plays critical roles in the final steps of viral release by interacting with host TSG101, a member of the vacuolar protein-sorting pathway and using other cellular host proteins involved in vesicle formation pathway. Also acts as a viroporin and forms ion conductive pores allowing viral particle release. Impairs the generation of type I interferon by down-regulating host TLR3 and TLR7 as well as their downstream signaling pathways. Down-regulates the phosphorylation of host IRF3 via the interaction with host SIRP-alpha, thereby inhibiting IFN-I expression. Interacts with host microtubules. This chain is Protein ORF3, found in Hepatitis E virus genotype 1 (isolate Human/Burma) (HEV-1).